The sequence spans 142 residues: Salivary protein 15a (142 aa).

Residues 1–20 form the signal peptide; that stretch reads MKYLGLALISAVFLIGACQA. 3 disulfide bridges follow: C27/C44, C40/C108, and C91/C117.

The protein belongs to the PBP/GOBP family. Female salivary gland (at protein level).

The protein localises to the secreted. Functionally, inhibits contact coagulation pathway activation in the host by sequestering anionic polymers, such as polyphosphate and dextran sulfate, and thus blocking interaction of protein components of the pathway with negatively charged surfaces. Inhibits dextran sulfate-mediated autoactivation of host coagulation factor XII (F12). Inhibits dextran sulfate-mediated autoactivation of host factor XI (F11). Inhibits polyphosphate-mediated activation of host F11 by thrombin (F2). May inhibit dextran sulfate-mediated bradykinin generation in host plasma. This Phlebotomus duboscqi (Sandfly) protein is Salivary protein 15a.